A 331-amino-acid chain; its full sequence is MSNDTLHKYEALPEDHRNVALRPCLIEEFVGQTEVIKNLKVFIQSAYERREPMDHVLLYGPPGLGKTTLAHIIAKELKVNFRSTAGPLLSKAGDLAAILTNLQPMDVLFIDEIHRLNRNIEEVLYSAMEDYCLDIVVGEGCGARTLKIDIPAFTLIGATTRFGLISNPLRDRFGIPLHLEFYSVDELVLVIKRAAGVICTSIDDSGAREIASRSRGTPRIALRLFRRVRDFLEFERKHGTIDGNFANSALFRLGIDGAGFDKMDLKYLKFVFEAKGPVGIDTIASALSEDVGNIEETIEPYLIKTCFIQRTPRGRVLTQKGFEYLLSSKYI.

A large ATPase domain (RuvB-L) region spans residues 1-182; it reads MSNDTLHKYE…FGIPLHLEFY (182 aa). Residues leucine 21, arginine 22, glycine 63, lysine 66, threonine 67, threonine 68, 129 to 131, arginine 172, tyrosine 182, and arginine 219 contribute to the ATP site; that span reads EDY. Threonine 67 is a Mg(2+) binding site. A small ATPAse domain (RuvB-S) region spans residues 183–254; that stretch reads SVDELVLVIK…FANSALFRLG (72 aa). Positions 257-331 are head domain (RuvB-H); the sequence is GAGFDKMDLK…FEYLLSSKYI (75 aa). 2 residues coordinate DNA: arginine 310 and arginine 315.

The protein belongs to the RuvB family. In terms of assembly, homohexamer. Forms an RuvA(8)-RuvB(12)-Holliday junction (HJ) complex. HJ DNA is sandwiched between 2 RuvA tetramers; dsDNA enters through RuvA and exits via RuvB. An RuvB hexamer assembles on each DNA strand where it exits the tetramer. Each RuvB hexamer is contacted by two RuvA subunits (via domain III) on 2 adjacent RuvB subunits; this complex drives branch migration. In the full resolvosome a probable DNA-RuvA(4)-RuvB(12)-RuvC(2) complex forms which resolves the HJ.

It is found in the cytoplasm. The catalysed reaction is ATP + H2O = ADP + phosphate + H(+). Functionally, the RuvA-RuvB-RuvC complex processes Holliday junction (HJ) DNA during genetic recombination and DNA repair, while the RuvA-RuvB complex plays an important role in the rescue of blocked DNA replication forks via replication fork reversal (RFR). RuvA specifically binds to HJ cruciform DNA, conferring on it an open structure. The RuvB hexamer acts as an ATP-dependent pump, pulling dsDNA into and through the RuvAB complex. RuvB forms 2 homohexamers on either side of HJ DNA bound by 1 or 2 RuvA tetramers; 4 subunits per hexamer contact DNA at a time. Coordinated motions by a converter formed by DNA-disengaged RuvB subunits stimulates ATP hydrolysis and nucleotide exchange. Immobilization of the converter enables RuvB to convert the ATP-contained energy into a lever motion, pulling 2 nucleotides of DNA out of the RuvA tetramer per ATP hydrolyzed, thus driving DNA branch migration. The RuvB motors rotate together with the DNA substrate, which together with the progressing nucleotide cycle form the mechanistic basis for DNA recombination by continuous HJ branch migration. Branch migration allows RuvC to scan DNA until it finds its consensus sequence, where it cleaves and resolves cruciform DNA. The chain is Holliday junction branch migration complex subunit RuvB from Anaplasma marginale (strain Florida).